The primary structure comprises 209 residues: Large ribosomal subunit protein uL3 (209 aa).

The segment at 144 to 165 is disordered; the sequence is GSMGAASDPSRTFKNKKMPGHM.

This sequence belongs to the universal ribosomal protein uL3 family. As to quaternary structure, part of the 50S ribosomal subunit. Forms a cluster with proteins L14 and L19.

Functionally, one of the primary rRNA binding proteins, it binds directly near the 3'-end of the 23S rRNA, where it nucleates assembly of the 50S subunit. The sequence is that of Large ribosomal subunit protein uL3 from Clostridium novyi (strain NT).